We begin with the raw amino-acid sequence, 285 residues long: 1,4-dihydroxy-2-naphthoyl-CoA synthase (285 aa).

Substrate-binding positions include R45, 84–88 (AGGDQ), Y97, 129–133 (YSIGG), T155, S161, Y258, and K273. 154–156 (QTG) provides a ligand contact to hydrogencarbonate.

This sequence belongs to the enoyl-CoA hydratase/isomerase family. MenB subfamily. As to quaternary structure, homohexamer. Hydrogencarbonate serves as cofactor.

The catalysed reaction is 2-succinylbenzoyl-CoA + H(+) = 1,4-dihydroxy-2-naphthoyl-CoA + H2O. It functions in the pathway quinol/quinone metabolism; 1,4-dihydroxy-2-naphthoate biosynthesis; 1,4-dihydroxy-2-naphthoate from chorismate: step 6/7. Its pathway is quinol/quinone metabolism; menaquinone biosynthesis. Converts o-succinylbenzoyl-CoA (OSB-CoA) to 1,4-dihydroxy-2-naphthoyl-CoA (DHNA-CoA). This chain is 1,4-dihydroxy-2-naphthoyl-CoA synthase, found in Salmonella typhimurium (strain LT2 / SGSC1412 / ATCC 700720).